We begin with the raw amino-acid sequence, 358 residues long: Nicotinate-nucleotide--dimethylbenzimidazole phosphoribosyltransferase (358 aa).

Catalysis depends on E313, which acts as the Proton acceptor.

This sequence belongs to the CobT family.

It catalyses the reaction 5,6-dimethylbenzimidazole + nicotinate beta-D-ribonucleotide = alpha-ribazole 5'-phosphate + nicotinate + H(+). Its pathway is nucleoside biosynthesis; alpha-ribazole biosynthesis; alpha-ribazole from 5,6-dimethylbenzimidazole: step 1/2. Catalyzes the synthesis of alpha-ribazole-5'-phosphate from nicotinate mononucleotide (NAMN) and 5,6-dimethylbenzimidazole (DMB). The protein is Nicotinate-nucleotide--dimethylbenzimidazole phosphoribosyltransferase of Corynebacterium glutamicum (strain R).